The chain runs to 419 residues: Argininosuccinate synthase (419 aa).

9 to 17 (AYSGGLDTS) contributes to the ATP binding site. Tyrosine 87 lines the L-citrulline pocket. An ATP-binding site is contributed by glycine 117. Threonine 119, asparagine 123, and aspartate 124 together coordinate L-aspartate. An L-citrulline-binding site is contributed by asparagine 123. L-citrulline contacts are provided by arginine 127, serine 175, serine 184, glutamate 260, and tyrosine 272.

The protein belongs to the argininosuccinate synthase family. Type 1 subfamily. As to quaternary structure, homotetramer.

The protein localises to the cytoplasm. It catalyses the reaction L-citrulline + L-aspartate + ATP = 2-(N(omega)-L-arginino)succinate + AMP + diphosphate + H(+). It functions in the pathway amino-acid biosynthesis; L-arginine biosynthesis; L-arginine from L-ornithine and carbamoyl phosphate: step 2/3. The chain is Argininosuccinate synthase from Brevibacillus brevis (strain 47 / JCM 6285 / NBRC 100599).